Reading from the N-terminus, the 152-residue chain is Large ribosomal subunit protein uL13 (152 aa).

It belongs to the universal ribosomal protein uL13 family. As to quaternary structure, part of the 50S ribosomal subunit.

In terms of biological role, this protein is one of the early assembly proteins of the 50S ribosomal subunit, although it is not seen to bind rRNA by itself. It is important during the early stages of 50S assembly. In Wolbachia pipientis wMel, this protein is Large ribosomal subunit protein uL13.